Reading from the N-terminus, the 881-residue chain is Envelope glycoprotein gp160 (881 aa).

An N-terminal signal peptide occupies residues 1–19 (MGCLGNQLLIAILLLSVYG). Over 20–696 (IYCTQYVTVF…ASWIKYIQYG (677 aa)) the chain is Extracellular. Residue Asn-37 is glycosylated (N-linked (GlcNAc...) asparagine; by host). A disulfide bridge links Cys-44 with Cys-57. N-linked (GlcNAc...) asparagine; by host glycans are attached at residues Asn-70, Asn-114, Asn-148, Asn-158, Asn-186, Asn-200, Asn-204, Asn-214, Asn-246, Asn-249, Asn-280, Asn-286, Asn-297, Asn-308, Asn-318, Asn-373, and Asn-379. 5 disulfide bridges follow: Cys-101–Cys-222, Cys-108–Cys-213, Cys-113–Cys-170, Cys-235–Cys-265, and Cys-245–Cys-257. The segment at 113 to 169 (CNKSETDRWGLTKSSTTITTAAPTSAPVSEKIDMVNETSSCIAQNNCTGLEQEQMIS) is V1. The interval 170–213 (CKFTMTGLKRDKTKEYNETWYSTDLVCEQGNSTDNESRCYMNHC) is V2. The interval 313–345 (CRRPGNKTVLPVTIMSGLVFHSQPINDRPKQAW) is V3. A disulfide bridge connects residues Cys-313 and Cys-346. 2 disulfide bridges follow: Cys-397/Cys-461 and Cys-404/Cys-434. Residues 404–434 (CKMNWFLNWVEDRDVTTQRPKERHRRNYVPC) are V4. N-linked (GlcNAc...) asparagine; by host glycosylation is found at Asn-462 and Asn-478. The segment at 477–484 (GNQTSITM) is V5. The tract at residues 528–548 (GVFVLGFLGFLATAGSAMGAA) is fusion peptide. Positions 591-607 (LQTRVTAIEKYLKDQAQ) are immunosuppression. Asn-627, Asn-636, and Asn-652 each carry an N-linked (GlcNAc...) asparagine; by host glycan. Residues 636 to 668 (NDTWQEWERKVDFLEENITALLEEAQIQQEKNM) are a coiled coil. Residues 673-694 (KLNSWDVFGNWFDLASWIKYIQ) are MPER; binding to GalCer. Residues 697–717 (IYVVVGVILLRIVIYIVQMLA) form a helical membrane-spanning segment. At 718-881 (KLRQGYRPVF…IRQGLELTLL (164 aa)) the chain is on the cytoplasmic side. Residues 723-726 (YRPV) carry the YXXV motif; contains endocytosis signal motif. Residues 737–761 (THTQQDPALPTREGKEGDGGEGGGN) form a disordered region. Cys-789 carries the S-palmitoyl cysteine; by host lipid modification. Positions 880–881 (LL) match the Di-leucine internalization motif motif.

As to quaternary structure, the mature envelope protein (Env) consists of a homotrimer of non-covalently associated gp120-gp41 heterodimers. The resulting complex protrudes from the virus surface as a spike. Interacts with host CD4 and CCR5. Gp120 also interacts with the C-type lectins CD209/DC-SIGN and CLEC4M/DC-SIGNR (collectively referred to as DC-SIGN(R)). The mature envelope protein (Env) consists of a homotrimer of non-covalently associated gp120-gp41 heterodimers. The resulting complex protrudes from the virus surface as a spike. Specific enzymatic cleavages in vivo yield mature proteins. Envelope glycoproteins are synthesized as an inactive precursor that is heavily N-glycosylated and processed likely by host cell furin in the Golgi to yield the mature SU and TM proteins. The cleavage site between SU and TM requires the minimal sequence [KR]-X-[KR]-R. Post-translationally, palmitoylation of the transmembrane protein and of Env polyprotein (prior to its proteolytic cleavage) is essential for their association with host cell membrane lipid rafts. Palmitoylation is therefore required for envelope trafficking to classical lipid rafts, but not for viral replication.

The protein localises to the virion membrane. The protein resides in the host cell membrane. Its subcellular location is the host endosome membrane. Its function is as follows. The surface protein gp120 (SU) attaches the virus to the host lymphoid cell by binding to the primary receptor CD4. This interaction induces a structural rearrangement creating a high affinity binding site for a chemokine coreceptor like CCR5. This peculiar 2 stage receptor-interaction strategy allows gp120 to maintain the highly conserved coreceptor-binding site in a cryptic conformation, protected from neutralizing antibodies. These changes are transmitted to the transmembrane protein gp41 and are thought to activate its fusogenic potential by unmasking its fusion peptide. Surface protein gp120 (SU) may target the virus to gut-associated lymphoid tissue (GALT) by binding host ITGA4/ITGB7 (alpha-4/beta-7 integrins), a complex that mediates T-cell migration to the GALT. Interaction between gp120 and ITGA4/ITGB7 would allow the virus to enter GALT early in the infection, infecting and killing most of GALT's resting CD4+ T-cells. This T-cell depletion is believed to be the major insult to the host immune system leading to AIDS. Functionally, the surface protein gp120 is a ligand for CD209/DC-SIGN and CLEC4M/DC-SIGNR, which are respectively found on dendritic cells (DCs), and on endothelial cells of liver sinusoids and lymph node sinuses. These interactions allow capture of viral particles at mucosal surfaces by these cells and subsequent transmission to permissive cells. DCs are professional antigen presenting cells, critical for host immunity by inducing specific immune responses against a broad variety of pathogens. They act as sentinels in various tissues where they take up antigen, process it, and present it to T-cells following migration to lymphoid organs. SIV subverts the migration properties of dendritic cells to gain access to CD4+ T-cells in lymph nodes. Virus transmission to permissive T-cells occurs either in trans (without DCs infection, through viral capture and transmission), or in cis (following DCs productive infection, through the usual CD4-gp120 interaction), thereby inducing a robust infection. In trans infection, bound virions remain infectious over days and it is proposed that they are not degraded, but protected in non-lysosomal acidic organelles within the DCs close to the cell membrane thus contributing to the viral infectious potential during DCs' migration from the periphery to the lymphoid tissues. On arrival at lymphoid tissues, intact virions recycle back to DCs' cell surface allowing virus transmission to CD4+ T-cells. Virion capture also seems to lead to MHC-II-restricted viral antigen presentation, and probably to the activation of SIV-specific CD4+ cells. In terms of biological role, the transmembrane protein gp41 (TM) acts as a class I viral fusion protein. Under the current model, the protein has at least 3 conformational states: pre-fusion native state, pre-hairpin intermediate state, and post-fusion hairpin state. During fusion of viral and target intracellular membranes, the coiled coil regions (heptad repeats) assume a trimer-of-hairpins structure, positioning the fusion peptide in close proximity to the C-terminal region of the ectodomain. The formation of this structure appears to drive apposition and subsequent fusion of viral and target cell membranes. Complete fusion occurs in host cell endosomes. The virus undergoes clathrin-dependent internalization long before endosomal fusion, thus minimizing the surface exposure of conserved viral epitopes during fusion and reducing the efficacy of inhibitors targeting these epitopes. Membranes fusion leads to delivery of the nucleocapsid into the cytoplasm. Its function is as follows. The envelope glycoprotein gp160 precursor down-modulates cell surface CD4 antigen by interacting with it in the endoplasmic reticulum and blocking its transport to the cell surface. The gp120-gp41 heterodimer allows rapid transcytosis of the virus through CD4 negative cells such as simple epithelial monolayers of the intestinal, rectal and endocervical epithelial barriers. Both gp120 and gp41 specifically recognize glycosphingolipids galactosyl-ceramide (GalCer) or 3' sulfo-galactosyl-ceramide (GalS) present in the lipid rafts structures of epithelial cells. Binding to these alternative receptors allows the rapid transcytosis of the virus through the epithelial cells. This transcytotic vesicle-mediated transport of virions from the apical side to the basolateral side of the epithelial cells does not involve infection of the cells themselves. The polypeptide is Envelope glycoprotein gp160 (env) (Cercopithecidae (Old World monkeys)).